Here is a 212-residue protein sequence, read N- to C-terminus: Imidazole glycerol phosphate synthase subunit HisH (212 aa).

Positions 3-212 constitute a Glutamine amidotransferase type-1 domain; it reads DVAIIDYGMG…MLANFISWAP (210 aa). Cys82 (nucleophile) is an active-site residue. Active-site residues include His192 and Glu194.

Heterodimer of HisH and HisF.

The protein localises to the cytoplasm. The catalysed reaction is 5-[(5-phospho-1-deoxy-D-ribulos-1-ylimino)methylamino]-1-(5-phospho-beta-D-ribosyl)imidazole-4-carboxamide + L-glutamine = D-erythro-1-(imidazol-4-yl)glycerol 3-phosphate + 5-amino-1-(5-phospho-beta-D-ribosyl)imidazole-4-carboxamide + L-glutamate + H(+). The enzyme catalyses L-glutamine + H2O = L-glutamate + NH4(+). It participates in amino-acid biosynthesis; L-histidine biosynthesis; L-histidine from 5-phospho-alpha-D-ribose 1-diphosphate: step 5/9. In terms of biological role, IGPS catalyzes the conversion of PRFAR and glutamine to IGP, AICAR and glutamate. The HisH subunit catalyzes the hydrolysis of glutamine to glutamate and ammonia as part of the synthesis of IGP and AICAR. The resulting ammonia molecule is channeled to the active site of HisF. The sequence is that of Imidazole glycerol phosphate synthase subunit HisH from Aromatoleum aromaticum (strain DSM 19018 / LMG 30748 / EbN1) (Azoarcus sp. (strain EbN1)).